A 215-amino-acid chain; its full sequence is Urease accessory protein UreG (215 aa).

The tract at residues 1-21 (MNAPAPSSARRTKKLPPLRVG) is disordered. 24–31 (GPVGSGKT) contacts GTP.

Belongs to the SIMIBI class G3E GTPase family. UreG subfamily. Homodimer. UreD, UreF and UreG form a complex that acts as a GTP-hydrolysis-dependent molecular chaperone, activating the urease apoprotein by helping to assemble the nickel containing metallocenter of UreC. The UreE protein probably delivers the nickel.

It is found in the cytoplasm. Functionally, facilitates the functional incorporation of the urease nickel metallocenter. This process requires GTP hydrolysis, probably effectuated by UreG. The polypeptide is Urease accessory protein UreG (Burkholderia lata (strain ATCC 17760 / DSM 23089 / LMG 22485 / NCIMB 9086 / R18194 / 383)).